The primary structure comprises 260 residues: Methanethiol S-methyltransferase (260 aa).

5 helical membrane-spanning segments follow: residues Cys27–Val47, Pro55–Ala75, Cys107–Val127, Gly134–Ile154, and Phe196–Leu216.

It belongs to the nurim family.

The protein resides in the membrane. It catalyses the reaction methanethiol + S-adenosyl-L-methionine = dimethyl sulfide + S-adenosyl-L-homocysteine + H(+). Its function is as follows. Catalyzes the methylation of methanethiol (MeSH) to yield dimethylsulphide (DMS). This chain is Methanethiol S-methyltransferase, found in Pseudomonas sp. (strain GM41(2012)).